A 307-amino-acid chain; its full sequence is Aspartate carbamoyltransferase catalytic subunit (307 aa).

The carbamoyl phosphate site is built by Arg-51 and Thr-52. Lys-80 is a binding site for L-aspartate. The carbamoyl phosphate site is built by Arg-101, His-129, and Gln-132. L-aspartate-binding residues include Arg-162 and Arg-225. Positions 264 and 265 each coordinate carbamoyl phosphate.

This sequence belongs to the aspartate/ornithine carbamoyltransferase superfamily. ATCase family. As to quaternary structure, heterododecamer (2C3:3R2) of six catalytic PyrB chains organized as two trimers (C3), and six regulatory PyrI chains organized as three dimers (R2).

It catalyses the reaction carbamoyl phosphate + L-aspartate = N-carbamoyl-L-aspartate + phosphate + H(+). It functions in the pathway pyrimidine metabolism; UMP biosynthesis via de novo pathway; (S)-dihydroorotate from bicarbonate: step 2/3. Catalyzes the condensation of carbamoyl phosphate and aspartate to form carbamoyl aspartate and inorganic phosphate, the committed step in the de novo pyrimidine nucleotide biosynthesis pathway. This Lachnoclostridium phytofermentans (strain ATCC 700394 / DSM 18823 / ISDg) (Clostridium phytofermentans) protein is Aspartate carbamoyltransferase catalytic subunit.